Reading from the N-terminus, the 380-residue chain is Cytochrome b (380 aa).

The next 4 helical transmembrane spans lie at 34 to 54 (FGSLLGICLVTQIVTGLLLAM), 78 to 99 (WLIRNLHANGASFFFICIYLHI), 114 to 134 (WNVGVILLLTLMATAFVGYVL), and 179 to 199 (FFALHFLLPFVIAGLTLVHLT). Heme b-binding residues include His-84 and His-98. Residues His-183 and His-197 each contribute to the heme b site. His-202 contributes to the a ubiquinone binding site. A run of 4 helical transmembrane segments spans residues 227-247 (IKDILGFALMLASLVALALFS), 289-309 (LGGVLALAASILVLFLMPLLH), 321-341 (LSQILFWVLVTNVLILTWIGS), and 348-368 (FIIIGQLASLSYFTIILVLFP).

Belongs to the cytochrome b family. As to quaternary structure, the cytochrome bc1 complex contains 11 subunits: 3 respiratory subunits (MT-CYB, CYC1 and UQCRFS1), 2 core proteins (UQCRC1 and UQCRC2) and 6 low-molecular weight proteins (UQCRH/QCR6, UQCRB/QCR7, UQCRQ/QCR8, UQCR10/QCR9, UQCR11/QCR10 and a cleavage product of UQCRFS1). This cytochrome bc1 complex then forms a dimer. Heme b is required as a cofactor.

Its subcellular location is the mitochondrion inner membrane. Its function is as follows. Component of the ubiquinol-cytochrome c reductase complex (complex III or cytochrome b-c1 complex) that is part of the mitochondrial respiratory chain. The b-c1 complex mediates electron transfer from ubiquinol to cytochrome c. Contributes to the generation of a proton gradient across the mitochondrial membrane that is then used for ATP synthesis. The protein is Cytochrome b (MT-CYB) of Vireo olivaceus (Red-eyed vireo).